Reading from the N-terminus, the 434-residue chain is CBL-interacting protein kinase 15 (434 aa).

The Protein kinase domain maps to 12–267 (YELGRLLGKG…IQKIKESTWF (256 aa)). ATP is bound by residues 18–26 (LGKGTFGKV) and lysine 41. The active-site Proton acceptor is aspartate 135. The segment at 153–182 (DFGLSALSESKRQDGLLHTTCGTPAYVAPE) is activation loop. In terms of domain architecture, NAF spans 298–333 (RKKNAHEDVKPMSVTNLNAFEIISFSKGFDLSGMFI). The interval 338–367 (RNEARFTSDKSASTIISKLEDVAKALNLRV) is PPI.

This sequence belongs to the protein kinase superfamily. CAMK Ser/Thr protein kinase family. SNF1 subfamily. It depends on Mn(2+) as a cofactor.

It catalyses the reaction L-seryl-[protein] + ATP = O-phospho-L-seryl-[protein] + ADP + H(+). It carries out the reaction L-threonyl-[protein] + ATP = O-phospho-L-threonyl-[protein] + ADP + H(+). Functionally, involved in salt stress tolerance. CIPK serine-threonine protein kinases interact with CBL proteins. Binding of a CBL protein to the regulatory NAF domain of CIPK protein lead to the activation of the kinase in a calcium-dependent manner. In Oryza sativa subsp. japonica (Rice), this protein is CBL-interacting protein kinase 15 (CIPK15).